A 142-amino-acid chain; its full sequence is Large ribosomal subunit protein uL11 (142 aa).

The protein belongs to the universal ribosomal protein uL11 family. Part of the ribosomal stalk of the 50S ribosomal subunit. Interacts with L10 and the large rRNA to form the base of the stalk. L10 forms an elongated spine to which L12 dimers bind in a sequential fashion forming a multimeric L10(L12)X complex. In terms of processing, one or more lysine residues are methylated.

Functionally, forms part of the ribosomal stalk which helps the ribosome interact with GTP-bound translation factors. In Vibrio campbellii (strain ATCC BAA-1116), this protein is Large ribosomal subunit protein uL11.